The primary structure comprises 97 residues: Large ribosomal subunit protein bL28 (97 aa).

This sequence belongs to the bacterial ribosomal protein bL28 family.

This chain is Large ribosomal subunit protein bL28, found in Rickettsia rickettsii (strain Iowa).